The chain runs to 30 residues: Propionyl-CoA carboxylase alpha chain (30 aa).

The Biotin carboxylation domain maps to 1–30 (PKIRKVLVANRGEIAIRVMRTXKELGIATV).

In terms of assembly, dodecamer composed of six biotin-containing alpha subunits and six beta subunits. The cofactor is Mg(2+). Mn(2+) is required as a cofactor. It depends on biotin as a cofactor.

The enzyme catalyses propanoyl-CoA + hydrogencarbonate + ATP = (S)-methylmalonyl-CoA + ADP + phosphate + H(+). Its pathway is metabolic intermediate metabolism; propanoyl-CoA degradation; succinyl-CoA from propanoyl-CoA: step 1/3. This is one of the 2 subunits of the biotin-dependent propionyl-CoA carboxylase (PCC), the enzyme catalyzing the carboxylation of propionyl-CoA/propanoyl-CoA to D-methylmalonyl-CoA/(S)-methylmalonyl-CoA. Within the holoenzyme, the alpha subunit catalyzes the ATP-dependent carboxylation of the biotin carried by the biotin carboxyl carrier (BCC) domain, while the beta subunit then transfers the carboxyl group from carboxylated biotin to propionyl-CoA. Propionyl-CoA carboxylase also carboxylates acetyl-CoA, butyryl-CoA and succinyl-CoA. This is Propionyl-CoA carboxylase alpha chain from Myxococcus xanthus.